We begin with the raw amino-acid sequence, 814 residues long: MATRYDSSITEPKWRERWERDGIYRFEPDSDKPKHYAVTMLPYPSGNLHIGHWYAMSPSDVHARYMRMRGYNVFFPMGFDAFGLPAENAAIKNNLDPRKWTYSNIEYMRGQLQSMGMMVDWDQQIVSADPEYYRWNQWFFIQFFKRGLAYKKFSAVDWCPKCNTTLAREQVVGDERRCERCDSLVTKRDLDQWYFKITSYADELLNFSELDWPERITTMQRNWIGRSEGAEISFKSEAGDPITVFSTRPDTLWGATFMVLAPEHPLVAKLTSAEQKASVDAYVAEAIRKTEVERQSTDDEKPKTGVWIGAYAINPASQERVPIWIADYVLMTYGTGAIMAVPGHDERDFAFAKTFGLAIKRVVTQSEQTAETPLEAAEPAYGTVVNSGQIDGLSSAEAKEAVINWLEAEQLGKRAINYRLRDWLVSRQRYWGTPIPMIYCPTCGTVPVPEDQLPLLLPDSVDFKPTGESPLKLHPTWRFTTCPTCGGEAERDTDTMDTFVDSSWYQVRYLSPHETNAPFTKAIADKWLPVDQYTGGREHAVMHLLYTRFWWKAMRDMGLVSANEPMTRLINQGVILGEDSNKMSKSRGNVIDPDMLVAQYGADTVRTFLMFIGPWEQGGPWNNRGIEGCVRFLDRAWRVVTDTPQRHDAVGDASTLERQTHRIIKKVGDDLQRFAFNTAIAGLMEFVNELMKVRETDVYGTTTWRKATETLTLLLAPIAPHIAEELWEFLGNSQSVHLQAWPSYDETLLIDESIELPVQINGKVRGKIQVAATADEPSIIATALADEKIAPLVAGKTIVKQIVVPNRLVNIVIK.

A 'HIGH' region motif is present at residues 42 to 52 (PYPSGNLHIGH). Positions 582-586 (KMSKS) match the 'KMSKS' region motif. K585 is a binding site for ATP.

The protein belongs to the class-I aminoacyl-tRNA synthetase family.

The protein resides in the cytoplasm. It catalyses the reaction tRNA(Leu) + L-leucine + ATP = L-leucyl-tRNA(Leu) + AMP + diphosphate. This chain is Leucine--tRNA ligase, found in Herpetosiphon aurantiacus (strain ATCC 23779 / DSM 785 / 114-95).